The sequence spans 424 residues: UPF0229 protein Ping_2705 (424 aa).

A disordered region spans residues 77–108; the sequence is PGNQDFIGGDRIERPPSGGAGGSGSGASDSGK.

The protein belongs to the UPF0229 family.

In Psychromonas ingrahamii (strain DSM 17664 / CCUG 51855 / 37), this protein is UPF0229 protein Ping_2705.